The following is a 291-amino-acid chain: Formamidopyrimidine-DNA glycosylase (291 aa).

The active-site Schiff-base intermediate with DNA is the Pro-2. The Proton donor role is filled by Glu-3. Lys-58 (proton donor; for beta-elimination activity) is an active-site residue. The DNA site is built by His-100, Arg-123, and Lys-166. The FPG-type zinc-finger motif lies at 257-291 (SVYGREGKECLHCGIPIVRILQSGRSSFYCSQCQK). Arg-281 functions as the Proton donor; for delta-elimination activity in the catalytic mechanism.

It belongs to the FPG family. Monomer. Requires Zn(2+) as cofactor.

It carries out the reaction Hydrolysis of DNA containing ring-opened 7-methylguanine residues, releasing 2,6-diamino-4-hydroxy-5-(N-methyl)formamidopyrimidine.. It catalyses the reaction 2'-deoxyribonucleotide-(2'-deoxyribose 5'-phosphate)-2'-deoxyribonucleotide-DNA = a 3'-end 2'-deoxyribonucleotide-(2,3-dehydro-2,3-deoxyribose 5'-phosphate)-DNA + a 5'-end 5'-phospho-2'-deoxyribonucleoside-DNA + H(+). Involved in base excision repair of DNA damaged by oxidation or by mutagenic agents. Acts as a DNA glycosylase that recognizes and removes damaged bases. Has a preference for oxidized purines, such as 7,8-dihydro-8-oxoguanine (8-oxoG). Has AP (apurinic/apyrimidinic) lyase activity and introduces nicks in the DNA strand. Cleaves the DNA backbone by beta-delta elimination to generate a single-strand break at the site of the removed base with both 3'- and 5'-phosphates. The protein is Formamidopyrimidine-DNA glycosylase of Bartonella henselae (strain ATCC 49882 / DSM 28221 / CCUG 30454 / Houston 1) (Rochalimaea henselae).